Reading from the N-terminus, the 50-residue chain is DLVXGTNFXKNNPXSTRVAANSXRSPSVYRQXXXXHAKKAAXPPAVVTLL.

The interval 1–27 (DLVXGTNFXKNNPXSTRVAANSXRSPS) is disordered. Residues 8-25 (FXKNNPXSTRVAANSXRS) show a composition bias toward polar residues.

In terms of biological role, inhibits trypsin and the toxin protease PR2 of M.anisopliae. Does not inhibit chymotrypsin, subtilisin Carlsberg, proteinase K, porcine pancreatic elastase and the toxin protease PR1 of M.anisopliae. The chain is Inducible serine protease inhibitor 1 from Galleria mellonella (Greater wax moth).